The sequence spans 245 residues: Venom nerve growth factor 1 (245 aa).

A signal peptide spans 1–18 (MSMLCYTLIIAFLIGIWA). A propeptide spanning residues 19 to 125 (APKSEDNVPL…ALNRNIRAKR (107 aa)) is cleaved from the precursor. Residues 47 to 66 (GLKTSRNTDQRHPAPKKAED) show a composition bias toward basic and acidic residues. The tract at residues 47 to 69 (GLKTSRNTDQRHPAPKKAEDQEL) is disordered. Disulfide bonds link C139–C206, C182–C234, and C194–C236. N-linked (GlcNAc...) asparagine glycans are attached at residues N148 and N151.

The protein belongs to the NGF-beta family. In terms of assembly, homodimer; non-covalently linked. Expressed by the venom gland.

The protein localises to the secreted. Nerve growth factor is important for the development and maintenance of the sympathetic and sensory nervous systems. It stimulates division and differentiation of sympathetic and embryonic sensory neurons as well as basal forebrain cholinergic neurons in the brain. Its relevance in the snake venom is not clear. However, it has been shown to inhibit metalloproteinase-dependent proteolysis of platelet glycoprotein Ib alpha, suggesting a metalloproteinase inhibition to prevent metalloprotease autodigestion and/or protection against prey proteases. Binds a lipid between the two protein chains in the homodimer. The lipid-bound form promotes histamine relase from mouse mast cells, contrary to the lipid-free form. In Tropidechis carinatus (Australian rough-scaled snake), this protein is Venom nerve growth factor 1.